The chain runs to 340 residues: Phospho-N-acetylmuramoyl-pentapeptide-transferase (340 aa).

Helical transmembrane passes span 3-23 (MSLI…PHFI), 53-73 (GGTV…FHVF), 79-99 (AYGA…IGFL), 119-139 (MALQ…PSGT), 144-164 (IGGL…FWIV), 176-196 (IDGL…IIAF), 200-220 (ELAI…FFVF), 227-247 (VFMG…ISIA), 250-270 (VEWT…SVML), and 315-335 (VDAF…WMVL).

This sequence belongs to the glycosyltransferase 4 family. MraY subfamily. Mg(2+) is required as a cofactor.

It localises to the cell membrane. It catalyses the reaction UDP-N-acetyl-alpha-D-muramoyl-L-alanyl-gamma-D-glutamyl-L-lysyl-D-alanyl-D-alanine + di-trans,octa-cis-undecaprenyl phosphate = Mur2Ac(oyl-L-Ala-gamma-D-Glu-L-Lys-D-Ala-D-Ala)-di-trans,octa-cis-undecaprenyl diphosphate + UMP. It functions in the pathway cell wall biogenesis; peptidoglycan biosynthesis. Its function is as follows. Catalyzes the initial step of the lipid cycle reactions in the biosynthesis of the cell wall peptidoglycan: transfers peptidoglycan precursor phospho-MurNAc-pentapeptide from UDP-MurNAc-pentapeptide onto the lipid carrier undecaprenyl phosphate, yielding undecaprenyl-pyrophosphoryl-MurNAc-pentapeptide, known as lipid I. The protein is Phospho-N-acetylmuramoyl-pentapeptide-transferase of Streptococcus thermophilus (strain ATCC BAA-250 / LMG 18311).